The following is a 496-amino-acid chain: Angiopoietin-2 (496 aa).

A signal peptide spans 1 to 18; that stretch reads MWQLVFFALSCDLVLAAA. N-linked (GlcNAc...) asparagine glycosylation is found at N89, N119, N133, N151, N240, and N304. Positions 130–255 form a coiled coil; sequence NLLNQTAEQT…KQQHDLMETV (126 aa). The Fibrinogen C-terminal domain maps to 275-495; that stretch reads KEEQIIFRDC…ATTMMIRPAD (221 aa). C284 and C313 are disulfide-bonded. D429, D431, C433, and C435 together coordinate Ca(2+). 2 disulfide bridges follow: C433-C435 and C437-C450.

As to quaternary structure, interacts with TEK/TIE2, competing for the same binding site as ANGPT1. Interacts with ITGA5. Interacts with SVEP1/polydom. Interacts with THBD; this interaction significantly inhibits the generation of activated PC and TAFIa/CPB2 by the thrombin/thrombomodulin complex.

Its subcellular location is the secreted. Functionally, binds to TEK/TIE2, competing for the ANGPT1 binding site, and modulating ANGPT1 signaling. Can induce tyrosine phosphorylation of TEK/TIE2 in the absence of ANGPT1. In the absence of angiogenic inducers, such as VEGF, ANGPT2-mediated loosening of cell-matrix contacts may induce endothelial cell apoptosis with consequent vascular regression. In concert with VEGF, it may facilitate endothelial cell migration and proliferation, thus serving as a permissive angiogenic signal. Involved in the regulation of lymphangiogenesis. The sequence is that of Angiopoietin-2 (ANGPT2) from Sus scrofa (Pig).